We begin with the raw amino-acid sequence, 760 residues long: Prolyl endopeptidase FAP (760 aa).

Topologically, residues 1–4 (MKTW) are cytoplasmic. The chain crosses the membrane as a helical; Signal-anchor for type II membrane protein span at residues 5–25 (VKIVFGVATSAVLALLVMCIV). The Extracellular segment spans residues 26–760 (LRPSRVHNSE…FLKQCFSLSD (735 aa)). N-linked (GlcNAc...) asparagine glycans are attached at residues asparagine 49, asparagine 92, and asparagine 99. Substrate-binding residues include glutamate 203 and glutamate 204. N-linked (GlcNAc...) asparagine glycosylation is found at asparagine 227 and asparagine 314. Intrachain disulfides connect cysteine 321–cysteine 332, cysteine 438–cysteine 441, and cysteine 448–cysteine 466. The active-site Charge relay system is serine 624. Cysteine 643 and cysteine 755 are oxidised to a cystine. N-linked (GlcNAc...) asparagine glycosylation is present at asparagine 679. Catalysis depends on charge relay system residues aspartate 702 and histidine 734.

It belongs to the peptidase S9B family. In terms of assembly, homodimer; homodimerization is required for activity of both plasma membrane and soluble forms. The monomer is inactive. Heterodimer with DPP4. Interacts with PLAUR; the interaction occurs at the cell surface of invadopodia membranes. Interacts with ITGB1. Interacts with ITGA3. Associates with integrin alpha-3/beta-1; the association occurs in a collagen-dependent manner at the cell surface of invadopodia membranes. In terms of processing, N-glycosylated. Post-translationally, the N-terminus may be blocked. Expressed in adipose tissue. Expressed in the dermal fibroblasts in the fetal skin. Expressed in the granulation tissue of healing wounds and on reactive stromal fibroblast in epithelial cancers. Expressed in activated fibroblast-like synoviocytes from inflamed synovial tissues. Expressed in activated hepatic stellate cells (HSC) and myofibroblasts from cirrhotic liver, but not detected in normal liver. Expressed in glioma cells (at protein level). Expressed in glioblastomas and glioma cells. Isoform 1 and isoform 2 are expressed in melanoma, carcinoma and fibroblast cell lines.

It localises to the cell surface. The protein resides in the cell membrane. It is found in the cell projection. Its subcellular location is the lamellipodium membrane. The protein localises to the invadopodium membrane. It localises to the ruffle membrane. The protein resides in the membrane. It is found in the secreted. Its subcellular location is the cytoplasm. It carries out the reaction Hydrolysis of Pro-|-Xaa &gt;&gt; Ala-|-Xaa in oligopeptides.. The enzyme catalyses Release of an N-terminal dipeptide, Xaa-Yaa-|-Zaa-, from a polypeptide, preferentially when Yaa is Pro, provided Zaa is neither Pro nor hydroxyproline.. Gelatinase activity is inhibited by serine-protease inhibitors, such as phenylmethylsulfonyl fluoride (PMSF), 4-(2-aminoethyl)-benzenesulfonyl fluoride hydrochloride (AEBSF), 4-amidino phenylsulfonyl fluoride (APSF) and diisopropyl fluorophosphate (DFP), N-ethylmaleimide (NEM) and phenylmethylsulfonyl fluoride (PMSF). Dipeptidyl peptidase activity is inhibited by 2,2'-azino-bis(3-ethylbenzthiazoline-6-sulfonic acid), diisopropylfluorophosphate (DFP). Prolyl endopeptidase activity is inhibited by the boronic acid peptide Ac-Gly-BoroPro, Ac-Gly-Pro-chloromethyl ketone and Thr-Ser-Gly-chloromethyl ketone. Cell surface glycoprotein serine protease that participates in extracellular matrix degradation and involved in many cellular processes including tissue remodeling, fibrosis, wound healing, inflammation and tumor growth. Both plasma membrane and soluble forms exhibit post-proline cleaving endopeptidase activity, with a marked preference for Ala/Ser-Gly-Pro-Ser/Asn/Ala consensus sequences, on substrate such as alpha-2-antiplasmin SERPINF2 and SPRY2. Degrade also gelatin, heat-denatured type I collagen, but not native collagen type I and IV, vitronectin, tenascin, laminin, fibronectin, fibrin or casein. Also has dipeptidyl peptidase activity, exhibiting the ability to hydrolyze the prolyl bond two residues from the N-terminus of synthetic dipeptide substrates provided that the penultimate residue is proline, with a preference for Ala-Pro, Ile-Pro, Gly-Pro, Arg-Pro and Pro-Pro. Natural neuropeptide hormones for dipeptidyl peptidase are the neuropeptide Y (NPY), peptide YY (PYY), substance P (TAC1) and brain natriuretic peptide 32 (NPPB). The plasma membrane form, in association with either DPP4, PLAUR or integrins, is involved in the pericellular proteolysis of the extracellular matrix (ECM), and hence promotes cell adhesion, migration and invasion through the ECM. Plays a role in tissue remodeling during development and wound healing. Participates in the cell invasiveness towards the ECM in malignant melanoma cancers. Enhances tumor growth progression by increasing angiogenesis, collagen fiber degradation and apoptosis and by reducing antitumor response of the immune system. Promotes glioma cell invasion through the brain parenchyma by degrading the proteoglycan brevican. Acts as a tumor suppressor in melanocytic cells through regulation of cell proliferation and survival in a serine protease activity-independent manner. This Homo sapiens (Human) protein is Prolyl endopeptidase FAP.